Reading from the N-terminus, the 225-residue chain is Ribosome maturation factor RimM (225 aa).

The PRC barrel domain maps to 144–225 (ADEFYWVDLI…RIVVDWEADY (82 aa)).

The protein belongs to the RimM family. In terms of assembly, binds ribosomal protein uS19.

Its subcellular location is the cytoplasm. An accessory protein needed during the final step in the assembly of 30S ribosomal subunit, possibly for assembly of the head region. Essential for efficient processing of 16S rRNA. May be needed both before and after RbfA during the maturation of 16S rRNA. It has affinity for free ribosomal 30S subunits but not for 70S ribosomes. The protein is Ribosome maturation factor RimM of Burkholderia ambifaria (strain MC40-6).